The following is a 329-amino-acid chain: MKTMTQLNIAVVVVVTVLIGMLRSSEAQLQMNFYAKSCPNAEKIISDHIQNHIHNGPSLAAPLIRMHFHDCFVRGCDGSVLINSTSGNAERDAPPNLTLRGFGFVERIKALLEKVCPKTVSCADIIALTARDAVVATGGPSWSVPTGRRDGRISNKTEATNNIPPPTSNFTTLQRLFKNQGLNLKDLVLLSGAHTIGVSHCSSMNTRLYNFSTTVKQDPSLDSQYAANLKANKCKSLNDNSTILEMDPGSSRSFDLSYYRLVLKRRGLFQSDSALTTNSATLKVINDLVNGSEKKFFKAFAKSMEKMGRVKVKTGSAGVIRTRCSVAGS.

The N-terminal stretch at 1-27 (MKTMTQLNIAVVVVVTVLIGMLRSSEA) is a signal peptide. Cystine bridges form between C38/C116, C71/C76, C122/C324, and C201/C234. Residue H69 is the Proton acceptor of the active site. Ca(2+) is bound by residues D70, V73, G75, D77, and S79. 2 N-linked (GlcNAc...) asparagine glycosylation sites follow: N83 and N155. The disordered stretch occupies residues 141-165 (SWSVPTGRRDGRISNKTEATNNIPP). The span at 156 to 165 (KTEATNNIPP) shows a compositional bias: polar residues. P164 lines the substrate pocket. The N-linked (GlcNAc...) asparagine glycan is linked to N169. A heme b-binding site is contributed by H194. T195 contacts Ca(2+). N-linked (GlcNAc...) asparagine glycosylation is found at N210 and N240. 3 residues coordinate Ca(2+): D247, S250, and D255. N290 carries N-linked (GlcNAc...) asparagine glycosylation.

It belongs to the peroxidase family. Classical plant (class III) peroxidase subfamily. Heme b is required as a cofactor. It depends on Ca(2+) as a cofactor. Mainly expressed in roots.

It is found in the secreted. The catalysed reaction is 2 a phenolic donor + H2O2 = 2 a phenolic radical donor + 2 H2O. In terms of biological role, removal of H(2)O(2), oxidation of toxic reductants, biosynthesis and degradation of lignin, suberization, auxin catabolism, response to environmental stresses such as wounding, pathogen attack and oxidative stress. These functions might be dependent on each isozyme/isoform in each plant tissue. The sequence is that of Peroxidase 30 (PER30) from Arabidopsis thaliana (Mouse-ear cress).